A 200-amino-acid chain; its full sequence is Small ribosomal subunit protein uS4 (200 aa).

Residues 92 to 155 form the S4 RNA-binding domain; that stretch reads SRLDAVVYQL…QKLNIIAESV (64 aa).

The protein belongs to the universal ribosomal protein uS4 family. As to quaternary structure, part of the 30S ribosomal subunit. Contacts protein S5. The interaction surface between S4 and S5 is involved in control of translational fidelity.

Its function is as follows. One of the primary rRNA binding proteins, it binds directly to 16S rRNA where it nucleates assembly of the body of the 30S subunit. In terms of biological role, with S5 and S12 plays an important role in translational accuracy. The polypeptide is Small ribosomal subunit protein uS4 (Macrococcus caseolyticus (strain JCSC5402) (Macrococcoides caseolyticum)).